The sequence spans 124 residues: uncharacterized protein (124 aa).

This is an uncharacterized protein from Saccharomyces cerevisiae (strain ATCC 204508 / S288c) (Baker's yeast).